Reading from the N-terminus, the 557-residue chain is MPERDSEPFSNPLAPDGHDVDDPHSFHQSKLTNEDFRKLLMTPRAAPTSAPPSKSRHHEMPREYNEDEDPAARRRKKKSYYAKLRQQEIERERELAEKYRDRAKERRDGVNKDYEETELISTTANYRAVGPTAEADKSAAEKRRQLIQESKFLGGDMEHTHLVKGLDFALLQKVRAEIASKEKEEEELMEKPQKETKKDEDPENKIEFKTRLGRNVYRMLFKSKSYERNELFLPGRMAYVVDLDDEYADTDIPTTLIRSKADCPTMEAQTTLTTNDIVISKLTQILSYLRQGTRNKKLKKKDKGKLEEKKPPEADMNIFEDIGDYVPSTTKTPRDKERERYRERERDRERDRDRERDRERDRERERERDREREREEEKKRHSYFEKPKVDDEPMDVDKGPGSAKELIKSINEKFAGSAGWEGTESLKKPEDKKQLGDFFGMSNSYAECYPATMDDMAVDSDEEVDYSKMDQGNKKGPLGRWDFDTQEEYSEYMNNKEALPKAAFQYGIKMSEGRKTRRFKETNDKAELDRQWKKISAIIEKRKRMEADGVEVKRPKY.

The interval 1 to 90 is disordered; it reads MPERDSEPFS…YAKLRQQEIE (90 aa). Basic and acidic residues predominate over residues 16-25; the sequence is DGHDVDDPHS. The segment covering 42 to 53 has biased composition (low complexity); sequence TPRAAPTSAPPS. An N6-acetyllysine mark is found at Lys98 and Lys137. Residue Lys151 forms a Glycyl lysine isopeptide (Lys-Gly) (interchain with G-Cter in SUMO2) linkage. Residues 181-205 form a disordered region; sequence KEKEEEELMEKPQKETKKDEDPENK. Ser287 bears the Phosphoserine mark. The span at 294–303 shows a compositional bias: basic residues; the sequence is RNKKLKKKDK. The disordered stretch occupies residues 294 to 402; sequence RNKKLKKKDK…PMDVDKGPGS (109 aa). A compositionally biased stretch (basic and acidic residues) spans 304–313; the sequence is GKLEEKKPPE. Glycyl lysine isopeptide (Lys-Gly) (interchain with G-Cter in SUMO2) cross-links involve residues Lys310 and Lys331. Positions 332 to 398 are enriched in basic and acidic residues; sequence TPRDKERERY…VDDEPMDVDK (67 aa). A run of 17 repeats spans residues 342-343, 344-345, 346-347, 348-349, 350-351, 352-353, 354-355, 356-357, 358-359, 360-361, 362-363, 364-365, 366-367, 368-369, 370-371, 372-373, and 374-375. Residues 342–375 are 17 X 2 AA tandem repeats of R-[ED]; it reads RERERDRERDRDRERDRERDRERERERDRERERE. Residues Lys386, Lys388, Lys404, and Lys408 each participate in a glycyl lysine isopeptide (Lys-Gly) (interchain with G-Cter in SUMO2) cross-link. A phosphoserine mark is found at Ser417 and Ser460. Position 485 is a phosphothreonine (Thr485). Residues Lys496, Lys501, and Lys509 each participate in a glycyl lysine isopeptide (Lys-Gly) (interchain with G-Cter in SUMO2) cross-link. Ser536 is modified (phosphoserine). Glycyl lysine isopeptide (Lys-Gly) (interchain with G-Cter in SUMO2) cross-links involve residues Lys541, Lys543, and Lys553.

Belongs to the RED family. In terms of assembly, component of the spliceosome B complex. Interacts with SMU1. Interacts with MAD1L1. May interact with DHX15. As to expression, ubiquitous.

Its subcellular location is the nucleus. It is found in the nucleoplasm. The protein localises to the chromosome. The protein resides in the cytoplasm. It localises to the cytoskeleton. Its subcellular location is the spindle pole. Involved in pre-mRNA splicing as a component of the spliceosome. Auxiliary spliceosomal protein that regulates selection of alternative splice sites in a small set of target pre-mRNA species. Required for normal mitotic cell cycle progression. Recruits MAD1L1 and MAD2L1 to kinetochores, and is required to trigger the spindle assembly checkpoint. Required for normal accumulation of SMU1. The polypeptide is Protein Red (Ik) (Mus musculus (Mouse)).